Consider the following 37-residue polypeptide: Large ribosomal subunit protein bL36 (37 aa).

This sequence belongs to the bacterial ribosomal protein bL36 family.

In Salinispora tropica (strain ATCC BAA-916 / DSM 44818 / JCM 13857 / NBRC 105044 / CNB-440), this protein is Large ribosomal subunit protein bL36.